The chain runs to 351 residues: Nicotinate-nucleotide--dimethylbenzimidazole phosphoribosyltransferase (351 aa).

The active-site Proton acceptor is glutamate 317.

Belongs to the CobT family.

The enzyme catalyses 5,6-dimethylbenzimidazole + nicotinate beta-D-ribonucleotide = alpha-ribazole 5'-phosphate + nicotinate + H(+). It functions in the pathway nucleoside biosynthesis; alpha-ribazole biosynthesis; alpha-ribazole from 5,6-dimethylbenzimidazole: step 1/2. Catalyzes the synthesis of alpha-ribazole-5'-phosphate from nicotinate mononucleotide (NAMN) and 5,6-dimethylbenzimidazole (DMB). This is Nicotinate-nucleotide--dimethylbenzimidazole phosphoribosyltransferase from Pseudomonas putida (strain GB-1).